Reading from the N-terminus, the 391-residue chain is 3-ketoacyl-CoA thiolase (391 aa).

Cys-95 (acyl-thioester intermediate) is an active-site residue. Residues His-347 and Cys-377 each act as proton acceptor in the active site.

Belongs to the thiolase-like superfamily. Thiolase family. As to quaternary structure, heterotetramer of two alpha chains (FadB) and two beta chains (FadA).

It localises to the cytoplasm. The enzyme catalyses an acyl-CoA + acetyl-CoA = a 3-oxoacyl-CoA + CoA. The protein operates within lipid metabolism; fatty acid beta-oxidation. Functionally, catalyzes the final step of fatty acid oxidation in which acetyl-CoA is released and the CoA ester of a fatty acid two carbons shorter is formed. In Pseudomonas fragi, this protein is 3-ketoacyl-CoA thiolase.